Here is a 1192-residue protein sequence, read N- to C-terminus: MAAPRQPEEAVDDTEFIDDHHDQHRDSVHTRLRANSAIMQFQKILVANRGEIPIRIFRTAHELSLQTVAVYSHEDHLSMHRQKADEAYMIGKRGQYTPVGAYLAIDEIVKIALEHGVHLIHPGYGFLSENAEFARKVEQSGMVFVGPTPQTIESLGDKVSARQLAIRCDVPVVPGTPGPVERYEEVKAFTDTYGFPIIIKAAFGGGGRGMRVVRDQAELRDSFERATSEARSAFGNGTVFVERFLDRPKHIEVQLLGDNHGNVVHLFERDCSVQRRHQKVVEIAPAKDLPADVRDRILADAVKLAKSVNYRNAGTAEFLVDQQNRYYFIEINPRIQVEHTITEEITGIDIVAAQIQIAAGATLEQLGLTQDRISTRGFAIQCRITTEDPSKGFSPDTGKIEVYRSAGGNGVRLDGGNGFAGAIITPHYDSMLVKCTCRGSTYEIARRKVVRALVEFRIRGVKTNIPFLTSLLSHPVFVDGTCWTTFIDDTPELFALVGSQNRAQKLLAYLGDVAVNGSSIKGQIGEPKLKGDIIKPVLHDAAGKPLDVSVPATKGWKQILDSEGPEAFARAVRANKGCLIMDTTWRDAHQSLLATRVRTIDLLNIAHETSHALANAYSLECWGGATFDVAMRFLYEDPWDRLRKLRKAVPNIPFQMLLRGANGVAYSSLPDNAIYHFCKQAKKCGVDIFRVFDALNDVDQLEVGIKAVHAAEGVVEATICYSGDMLNPSKKYNLPYYLDLVDKVVQFKPHVLGIKDMAGVLKPQAARLLIGSIRERYPDLPIHVHTHDSAGTGVASMIACAQAGADAVDAATDSLSGMTSQPSIGAILASLEGTEHDPGLNSAQVRALDTYWAQLRLLYSPFEAGLTGPDPEVYEHEIPGGQLTNLIFQASQLGLGQQWAETKKAYESANDLLGDVVKVTPTSKVVGDLAQFMVSNKLTAEDVIARAGELDFPGSVLEFLEGLMGQPYGGFPEPLRSRALRDRRKLDKRPGLYLEPLDLAKIKSQIRENYGAATEYDVASYAMYPKVFEDYKKFVAKFGDLSVLPTRYFLAKPEIGEEFHVELEKGKVLILKLLAIGPLSEQTGQREVFYEVNGEVRQVSVDDKKASVENTARPKAELGDSSQVGAPMSGVVVEIRVHDGLEVKKGDPIAVLSAMKMEMVISAPHSGKVSSLLVKEGDSVDGQDLVCKIVKA.

The tract at residues 1–23 (MAAPRQPEEAVDDTEFIDDHHDQ) is disordered. A Biotin carboxylation domain is found at 40–492 (QFQKILVANR…WTTFIDDTPE (453 aa)). ATP is bound by residues lysine 158, glutamate 242, and histidine 277. One can recognise an ATP-grasp domain in the interval 162–359 (RQLAIRCDVP…IVAAQIQIAA (198 aa)). The active site involves arginine 334. In terms of domain architecture, Pyruvate carboxyltransferase spans 578–846 (CLIMDTTWRD…DPGLNSAQVR (269 aa)). Substrate-binding positions include 586-590 (RDAHQ) and arginine 659. Aspartate 587 contributes to the a divalent metal cation binding site. Lysine 755, histidine 785, and histidine 787 together coordinate a divalent metal cation. Lysine 755 bears the N6-carboxylysine mark. A substrate-binding site is contributed by threonine 920. One can recognise a Biotinyl-binding domain in the interval 1115-1190 (KAELGDSSQV…DGQDLVCKIV (76 aa)). Lysine 1156 carries the post-translational modification N6-biotinyllysine.

Biotin serves as cofactor. It depends on Zn(2+) as a cofactor.

It is found in the cytoplasm. It catalyses the reaction hydrogencarbonate + pyruvate + ATP = oxaloacetate + ADP + phosphate + H(+). It participates in carbohydrate biosynthesis; gluconeogenesis. In terms of biological role, pyruvate carboxylase catalyzes a 2-step reaction, involving the ATP-dependent carboxylation of the covalently attached biotin in the first step and the transfer of the carboxyl group to pyruvate in the second. The sequence is that of Pyruvate carboxylase (pyc) from Aspergillus niger.